Here is a 400-residue protein sequence, read N- to C-terminus: Argininosuccinate synthase (400 aa).

ATP contacts are provided by residues 6–14 and A33; that span reads AYSGGLDTS. L-citrulline contacts are provided by Y84 and S89. G114 is a binding site for ATP. L-aspartate is bound by residues T116, N120, and D121. N120 is an L-citrulline binding site. L-citrulline-binding residues include R124, S173, S182, E258, and Y270.

Belongs to the argininosuccinate synthase family. Type 1 subfamily. In terms of assembly, homotetramer.

The protein resides in the cytoplasm. The catalysed reaction is L-citrulline + L-aspartate + ATP = 2-(N(omega)-L-arginino)succinate + AMP + diphosphate + H(+). It participates in amino-acid biosynthesis; L-arginine biosynthesis; L-arginine from L-ornithine and carbamoyl phosphate: step 2/3. This chain is Argininosuccinate synthase, found in Thermus thermophilus (strain ATCC BAA-163 / DSM 7039 / HB27).